The primary structure comprises 171 residues: MGDLTSTNLASAILAAEEGGGTSNFLLPNGTFFAVLLIFLIVLGVIAKWVVPPISKVLAEREAMLAKTAADNRKSAEQVAAARADYDKTLAEARGEASSIRDEARVAGRQVVDEKRATANGEVAETVKTADEKLTQQGSAAQSELQSSVDALSATLASRILGVDVNTRGSQ.

The chain crosses the membrane as a helical span at residues 32–52 (FFAVLLIFLIVLGVIAKWVVP).

This sequence belongs to the ATPase B chain family. As to quaternary structure, F-type ATPases have 2 components, F(1) - the catalytic core - and F(0) - the membrane proton channel. F(1) has five subunits: alpha(3), beta(3), gamma(1), delta(1), epsilon(1). F(0) has three main subunits: a(1), b(2) and c(10-14). The alpha and beta chains form an alternating ring which encloses part of the gamma chain. F(1) is attached to F(0) by a central stalk formed by the gamma and epsilon chains, while a peripheral stalk is formed by the delta and b chains.

It is found in the cell membrane. F(1)F(0) ATP synthase produces ATP from ADP in the presence of a proton or sodium gradient. F-type ATPases consist of two structural domains, F(1) containing the extramembraneous catalytic core and F(0) containing the membrane proton channel, linked together by a central stalk and a peripheral stalk. During catalysis, ATP synthesis in the catalytic domain of F(1) is coupled via a rotary mechanism of the central stalk subunits to proton translocation. In terms of biological role, component of the F(0) channel, it forms part of the peripheral stalk, linking F(1) to F(0). This Mycolicibacterium gilvum (strain PYR-GCK) (Mycobacterium gilvum (strain PYR-GCK)) protein is ATP synthase subunit b.